Here is a 309-residue protein sequence, read N- to C-terminus: MQNAGSLVVLGSINADHILNLQSFPTPGETVTGNHYQVAFGGKGANQAVAAGRSGANIAFIACTGDDSIGESVRQQLATDNIDITPVSVIKGESTGVALIFVNGEGENVIGIHAGANAALSPALVEAQRERIANASALLMQLESPLESVMAAAKIAHQNKTIVALNPAPARELPDELLALVDIITPNETEAEKLTGIRVENDEDAAKAAQVLHEKGIRTVLITLGSRGVWASVNGEGQRVPGFRVQAVDTIAAGDTFNGALITALLEEKPLPEAIRFAHAAAAIAVTRKGAQPSVPWREEIDAFLDRQR.

Substrate is bound by residues 14 to 16 (NAD), 42 to 46 (GKGAN), and glutamate 143. Residues asparagine 187 and 223-228 (TLGSRG) each bind ATP. K(+)-binding residues include aspartate 249 and isoleucine 251. ATP contacts are provided by residues 254–255 (GD) and histidine 279. Residue aspartate 255 coordinates substrate. The active-site Proton acceptor is aspartate 255. Positions 285, 288, 290, and 294 each coordinate K(+).

This sequence belongs to the carbohydrate kinase PfkB family. Ribokinase subfamily. As to quaternary structure, homodimer. Mg(2+) serves as cofactor.

Its subcellular location is the cytoplasm. The enzyme catalyses D-ribose + ATP = D-ribose 5-phosphate + ADP + H(+). It functions in the pathway carbohydrate metabolism; D-ribose degradation; D-ribose 5-phosphate from beta-D-ribopyranose: step 2/2. Its activity is regulated as follows. Activated by a monovalent cation that binds near, but not in, the active site. The most likely occupant of the site in vivo is potassium. Ion binding induces a conformational change that may alter substrate affinity. Catalyzes the phosphorylation of ribose at O-5 in a reaction requiring ATP and magnesium. The resulting D-ribose-5-phosphate can then be used either for sythesis of nucleotides, histidine, and tryptophan, or as a component of the pentose phosphate pathway. The polypeptide is Ribokinase (Escherichia coli O157:H7).